The following is a 24-amino-acid chain: Brevinin-1HSa (24 aa).

Cys-18 and Cys-24 are joined by a disulfide.

In terms of tissue distribution, expressed by the skin glands.

The protein localises to the secreted. Functionally, has antibacterial activity against the Gram-positive bacterium S.aureus ATCC 25923 (MIC=3 uM) and the Gram-negative bacterium E.coli ATCC 25726 (MIC=24 uM). This Odorrana hosii (Hose's rock frog) protein is Brevinin-1HSa.